Reading from the N-terminus, the 796-residue chain is Ent-copalyl diphosphate synthase 4 (796 aa).

Residues 1–23 (MSSSSIVTSLLRPTTAADGVLPR) constitute a chloroplast transit peptide. Lys-240 is a substrate binding site. Residues Asp-371 and Asp-373 each coordinate Mg(2+). The DXDD motif motif lies at 371-374 (DVDD). Residue Lys-457 coordinates substrate.

It belongs to the terpene synthase family. Tpsc subfamily. It depends on Mg(2+) as a cofactor. In terms of tissue distribution, highly expressed in leaves, and, at low levels, in stems, but barely in roots and flowers.

It is found in the plastid. The protein resides in the chloroplast. It carries out the reaction (2E,6E,10E)-geranylgeranyl diphosphate = ent-copalyl diphosphate. Its pathway is secondary metabolite biosynthesis; terpenoid biosynthesis. In terms of biological role, involved in the biosynthesis of ent-kaurene diterpenoids natural products such as oridonin, miltiradiene, eriocalyxin B and nezukol, known to exhibit antitumor, anti-inflammatory and antibacterial activities. Catalyzes the conversion of (2E,6E,10E)-geranylgeranyl diphosphate (GGPP) to ent-copalyl diphosphate (ent-CPP). This chain is Ent-copalyl diphosphate synthase 4, found in Isodon rubescens (Rabdosia rubescens).